Here is a 188-residue protein sequence, read N- to C-terminus: UPF0398 protein OEOE_1093 (188 aa).

Belongs to the UPF0398 family.

In Oenococcus oeni (strain ATCC BAA-331 / PSU-1), this protein is UPF0398 protein OEOE_1093.